The chain runs to 185 residues: uncharacterized protein (185 aa).

A run of 2 helical transmembrane segments spans residues 1 to 21 (MMKF…LTPE) and 111 to 131 (FLWI…AFAW).

The protein to A.aeolicus aq_1900.

The protein resides in the cell membrane. This is an uncharacterized protein from Aquifex aeolicus (strain VF5).